The primary structure comprises 497 residues: Probable cytosol aminopeptidase (497 aa).

Residues K267 and D272 each contribute to the Mn(2+) site. The active site involves K279. Residues D290, D349, and E351 each coordinate Mn(2+). R353 is an active-site residue.

The protein belongs to the peptidase M17 family. It depends on Mn(2+) as a cofactor.

The protein resides in the cytoplasm. It carries out the reaction Release of an N-terminal amino acid, Xaa-|-Yaa-, in which Xaa is preferably Leu, but may be other amino acids including Pro although not Arg or Lys, and Yaa may be Pro. Amino acid amides and methyl esters are also readily hydrolyzed, but rates on arylamides are exceedingly low.. The catalysed reaction is Release of an N-terminal amino acid, preferentially leucine, but not glutamic or aspartic acids.. In terms of biological role, presumably involved in the processing and regular turnover of intracellular proteins. Catalyzes the removal of unsubstituted N-terminal amino acids from various peptides. The chain is Probable cytosol aminopeptidase from Syntrophotalea carbinolica (strain DSM 2380 / NBRC 103641 / GraBd1) (Pelobacter carbinolicus).